Consider the following 116-residue polypeptide: MKIRKSILAGTLAIVLASPLVTNLDKNEAQASTSLPTSNEYQNEKLANELKSLLDELNVNELATGSLNTYYKRTIKISGLKAMYALKSKDFKKMSEAKYQLQKIYNEIDEALKSKY.

The N-terminal stretch at 1-31 is a signal peptide; sequence MKIRKSILAGTLAIVLASPLVTNLDKNEAQA. Residues 62–79 form an essential for activity region; the sequence is LATGSLNTYYKRTIKISG.

Belongs to the SCIN family.

It is found in the secreted. Functionally, involved in countering the first line of host defense mechanisms. Efficiently inhibits opsonization, phagocytosis and killing of S.aureus by human neutrophils. Acts by binding and stabilizing human C3 convertases (C4b2a and C3bBb), leading to their inactivation. The convertases are no longer able to cleave complement C3, therefore preventing further C3b deposition on the bacterial surface and phagocytosis of the bacterium. Also prevents C5a-induced neutrophil responses. This is Staphylococcal complement inhibitor (scn) from Staphylococcus aureus (strain N315).